Reading from the N-terminus, the 546-residue chain is uncharacterized protein (546 aa).

The 72-residue stretch at 52–123 (SVAELRDVQP…NTIEQLLQEN (72 aa)) folds into the SLH domain.

It belongs to the OprB family.

This is an uncharacterized protein from Synechocystis sp. (strain ATCC 27184 / PCC 6803 / Kazusa).